We begin with the raw amino-acid sequence, 214 residues long: Cytochrome b (214 aa).

The next 4 membrane-spanning stretches (helical) occupy residues 31–51, 75–96, 111–131, and 176–196; these read FGSM…FLAI, WIMQ…YIHI, WLSG…GYVL, and FFAL…IHIL. 2 residues coordinate heme b: His-81 and His-95. His-180 and His-194 together coordinate heme b. Residue His-199 participates in a ubiquinone binding.

It belongs to the cytochrome b family. In terms of assembly, the cytochrome bc1 complex contains 3 respiratory subunits (MT-CYB, CYC1 and UQCRFS1), 2 core proteins (UQCRC1 and UQCRC2) and probably 6 low-molecular weight proteins. Heme b is required as a cofactor.

The protein localises to the mitochondrion inner membrane. Its function is as follows. Component of the ubiquinol-cytochrome c reductase complex (complex III or cytochrome b-c1 complex) that is part of the mitochondrial respiratory chain. The b-c1 complex mediates electron transfer from ubiquinol to cytochrome c. Contributes to the generation of a proton gradient across the mitochondrial membrane that is then used for ATP synthesis. The protein is Cytochrome b (MT-CYB) of Trimeresurus stejnegeri (Chinese green tree viper).